We begin with the raw amino-acid sequence, 411 residues long: Serpin A3-3 (411 aa).

An N-terminal signal peptide occupies residues 1 to 24 (MRAERLSPLLALGLLVAGIRSVHC). Residues N100, N180, N230, N264, and N318 are each glycosylated (N-linked (GlcNAc...) asparagine).

Belongs to the serpin family. As to quaternary structure, homodimer.

It localises to the cytoplasmic vesicle. The protein localises to the secretory vesicle. The protein resides in the chromaffin granule. Its subcellular location is the secreted. In terms of biological role, serine protease inhibitor. Strongly inhibits elastase and trypsin stoichiometrically at the molar ratio of 1:1. Acts as a moderate inhibitor of plasmin and chymotrypsin. Does not inhibit thrombin, urokinase, kallikrein, tissue plasminogen activator, cathepsin G or the cysteine proteases papain, cathepsin B or cathepsin L. In Bos taurus (Bovine), this protein is Serpin A3-3 (SERPINA3-3).